Consider the following 542-residue polypeptide: CTP synthase (542 aa).

Positions 1-265 (MTRYIFITGG…DDEVLSVFGI (265 aa)) are amidoligase domain. Residue Ser-13 coordinates CTP. Ser-13 is a binding site for UTP. Residues 14–19 (SLGKGL) and Asp-71 each bind ATP. Residues Asp-71 and Glu-139 each contribute to the Mg(2+) site. CTP-binding positions include 146–148 (DIE), 186–191 (KTKPTQ), and Lys-222. UTP-binding positions include 186-191 (KTKPTQ) and Lys-222. The Glutamine amidotransferase type-1 domain maps to 291-541 (TIAIVGKYTG…VEAAVEQSRL (251 aa)). An L-glutamine-binding site is contributed by Gly-353. The active-site Nucleophile; for glutamine hydrolysis is Cys-380. Residues 381 to 384 (FGMQ), Glu-404, and Arg-469 each bind L-glutamine. Catalysis depends on residues His-514 and Glu-516.

This sequence belongs to the CTP synthase family. In terms of assembly, homotetramer.

It catalyses the reaction UTP + L-glutamine + ATP + H2O = CTP + L-glutamate + ADP + phosphate + 2 H(+). It carries out the reaction L-glutamine + H2O = L-glutamate + NH4(+). The catalysed reaction is UTP + NH4(+) + ATP = CTP + ADP + phosphate + 2 H(+). The protein operates within pyrimidine metabolism; CTP biosynthesis via de novo pathway; CTP from UDP: step 2/2. With respect to regulation, allosterically activated by GTP, when glutamine is the substrate; GTP has no effect on the reaction when ammonia is the substrate. The allosteric effector GTP functions by stabilizing the protein conformation that binds the tetrahedral intermediate(s) formed during glutamine hydrolysis. Inhibited by the product CTP, via allosteric rather than competitive inhibition. Its function is as follows. Catalyzes the ATP-dependent amination of UTP to CTP with either L-glutamine or ammonia as the source of nitrogen. Regulates intracellular CTP levels through interactions with the four ribonucleotide triphosphates. The polypeptide is CTP synthase (Parvibaculum lavamentivorans (strain DS-1 / DSM 13023 / NCIMB 13966)).